A 296-amino-acid chain; its full sequence is CCAAT/enhancer-binding protein beta (296 aa).

The interval 1–22 (MHRLLAWDAACLPPPPAAFRPM) is required for Lys-133 sumoylation. Residue R3 is modified to Asymmetric dimethylarginine; by CARM1. A required for MYC transcriptional repression region spans residues 22–104 (MEVANFYYEP…YGAKPSKKPA (83 aa)). N6-acetyllysine; alternate is present on K39. An N6-methylated lysine; alternate modification is found at K39. An N6-acetyllysine; by KAT2A and KAT2B mark is found at K98 and K101. K102 carries the N6-acetyllysine; by KAT2A and KAT2B; alternate modification. Glycyl lysine isopeptide (Lys-Gly) (interchain with G-Cter in SUMO2); alternate cross-links involve residues K102 and K133. Residue K133 forms a Glycyl lysine isopeptide (Lys-Gly) (interchain with G-Cter in SUMO); alternate linkage. K144 is covalently cross-linked (Glycyl lysine isopeptide (Lys-Gly) (interchain with G-Cter in SUMO2)). The disordered stretch occupies residues 171-199 (SGSSGSLSTSSSSSPPGTPSPADAKAAPA). Phosphothreonine; by GSK3-beta is present on T179. Residues S180 and S181 are each glycosylated (O-linked (GlcNAc) serine). At S184 the chain carries Phosphoserine; by GSK3-beta. T188 carries the post-translational modification Phosphothreonine; by RPS6KA1, CDK2 and MAPK. Residues K211 and K213 each participate in a glycyl lysine isopeptide (Lys-Gly) (interchain with G-Cter in SUMO2) cross-link. T217 bears the Phosphothreonine; by RPS6KA1 and PKC/PRKCA mark. In terms of domain architecture, bZIP spans 222–285 (SDEYKMRRER…STLRNLFKQL (64 aa)). The interval 226 to 246 (KMRRERNNIAVRKSRDKAKMR) is basic motif. Residue S239 is modified to Phosphoserine; by PKC/PRKCA. The leucine-zipper stretch occupies residues 248–255 (LETQHKVL). Residue S276 is modified to Phosphoserine; by CaMK2. Residue K283 forms a Glycyl lysine isopeptide (Lys-Gly) (interchain with G-Cter in SUMO2) linkage.

It belongs to the bZIP family. C/EBP subfamily. As to quaternary structure, binds DNA as a homodimer and as a heterodimer. Interacts with ATF4. Binds DNA as a heterodimer with ATF4. Interacts with MYB; within the complex, MYB and CEBPB bind to different promoter regions. Can form stable heterodimers with CEBPA, CEBPD and CEBPE. Interacts with SIX1. Isoform 2 and isoform 3 also form heterodimers. Interacts with TRIM28 and PTGES2. Interacts with PRDM16. Interacts with CCDC85B. Forms a complex with THOC5. Interacts with ZNF638; this interaction increases transcriptional activation. Interacts with CIDEA and CIDEC. Interaction with CIDEA increases transcriptional activation of a subset of CEBPB downstream target genes, including ID2, IGF1, PRLR, SOCS1, SOCS3, XDH. Interaction with CIDEC increases transcriptional activation of SOCS1, SOCS3, TGFB1, TGFBR1, ID2 and XDH. Interacts with DDIT3/CHOP. Interacts with EP300; recruits EP300 to chromatin. Interacts with RORA; the interaction disrupts interaction with EP300. Interacts (not methylated) with MED23, MED26, SMARCA2, SMARCB1 and SMARCC1. Interacts with KAT2A and KAT2B. Interacts with ATF5; EP300 is required for ATF5 and CEBPB interaction and DNA binding. Interacts with NFE2L1; the heterodimer represses expression of DSPP during odontoblast differentiation. Sumoylated by polymeric chains of SUMO2 or SUMO3. Sumoylation at Lys-133 is required for inhibition of T-cells proliferation. In adipocytes, sumoylation at Lys-133 by PIAS1 leads to ubiquitination and subsequent proteasomal degradation. Desumoylated by SENP2, which abolishes ubiquitination and stabilizes protein levels. Post-translationally, ubiquitinated, leading to proteasomal degradation. In terms of processing, phosphorylated at Thr-188 by MAPK and CDK2, serves to prime phosphorylation at Thr-179 and Ser-184 by GSK3B and acquire DNA-binding as well as transactivation activities, required to induce adipogenesis. MAPK and CDK2 act sequentially to maintain Thr-188 in the primed phosphorylated state during mitotical cloning expansion and thereby progression of terminal differentiation. Phosphorylation at Thr-217 enhances transactivation activity. Phosphorylation at Ser-276 in response to calcium increases transactivation activity. Phosphorylated at Thr-188 by RPS6KA1. O-glycosylated, glycosylation at Ser-180 and Ser-181 prevents phosphorylation on Thr-188, Ser-184 and Thr-179 and DNA binding activity which delays the adipocyte differentiation program. Post-translationally, acetylated. Acetylation at Lys-39 is an important and dynamic regulatory event that contributes to its ability to transactivate target genes, including those associated with adipogenesis and adipocyte function. Deacetylation by HDAC1 represses its transactivation activity. Acetylated by KAT2A and KAT2B within a cluster of lysine residues between amino acids 98-102, this acetylation is strongly induced by glucocorticoid treatment and enhances transactivation activity. In terms of processing, methylated. Methylation at Arg-3 by CARM1 and at Lys-39 by EHMT2, inhibits transactivation activity. Methylation is probably inhibited by phosphorylation at Thr-188. Abundantly expressed in myoblasts. Enriched in brown adipose tissue (BAT) versus white adipose tissue (WAT). Expressed in hepatocytes (at protein level). Expressed in T lymphocytes. The expression in granulosa cells of antral follicles is induced by luteinizing hormone. Expressed in chondrocytes and osteoblasts (at protein level).

The protein localises to the nucleus. It is found in the cytoplasm. Important transcription factor regulating the expression of genes involved in immune and inflammatory responses. Also plays a significant role in adipogenesis, as well as in the gluconeogenic pathway, liver regeneration, and hematopoiesis. The consensus recognition site is 5'-T[TG]NNGNAA[TG]-3'. Its functional capacity is governed by protein interactions and post-translational protein modifications. During early embryogenesis, plays essential and redundant roles with CEBPA. Has a promitotic effect on many cell types such as hepatocytes and adipocytes but has an antiproliferative effect on T-cells by repressing MYC expression, facilitating differentiation along the T-helper 2 lineage. Binds to regulatory regions of several acute-phase and cytokines genes and plays a role in the regulation of acute-phase reaction and inflammation. Also plays a role in intracellular bacteria killing. During adipogenesis, is rapidly expressed and, after activation by phosphorylation, induces CEBPA and PPARG, which turn on the series of adipocyte genes that give rise to the adipocyte phenotype. The delayed transactivation of the CEBPA and PPARG genes by CEBPB appears necessary to allow mitotic clonal expansion and thereby progression of terminal differentiation. Essential for female reproduction because of a critical role in ovarian follicle development. Restricts osteoclastogenesis. Together with NFE2L1; represses expression of DSPP during odontoblast differentiation. Functionally, essential for gene expression induction in activated macrophages. Plays a major role in immune responses such as CD4(+) T-cell response, granuloma formation and endotoxin shock. Not essential for intracellular bacteria killing. Its function is as follows. Acts as a dominant negative through heterodimerization with isoform 2. Promotes osteoblast differentiation and osteoclastogenesis. This Mus musculus (Mouse) protein is CCAAT/enhancer-binding protein beta.